Consider the following 132-residue polypeptide: RING-H2 finger protein ATL39 (132 aa).

The helical transmembrane segment at 10–30 (TIVFAFASIGFIAFYIINYYI) threads the bilayer. The segment at 85–127 (CVVCLNEFKDDETLRLVPPCVHVFHADCVDIWLSHSSTCPICR) adopts an RING-type; atypical zinc-finger fold.

Belongs to the RING-type zinc finger family. ATL subfamily.

It localises to the membrane. It catalyses the reaction S-ubiquitinyl-[E2 ubiquitin-conjugating enzyme]-L-cysteine + [acceptor protein]-L-lysine = [E2 ubiquitin-conjugating enzyme]-L-cysteine + N(6)-ubiquitinyl-[acceptor protein]-L-lysine.. Its pathway is protein modification; protein ubiquitination. The protein is RING-H2 finger protein ATL39 (ATL39) of Arabidopsis thaliana (Mouse-ear cress).